The chain runs to 205 residues: Non-structural protein NS3 (205 aa).

Residues 177–205 (GTRSPETGCRKVTSGLPHGASGGSGTRQG) are disordered. The span at 196–205 (ASGGSGTRQG) shows a compositional bias: gly residues.

The protein belongs to the orbivirus NS3 family.

In terms of biological role, may play a role in the release of virions from infected cells. The polypeptide is Non-structural protein NS3 (Segment-10) (Broadhaven virus (BRD)).